A 368-amino-acid polypeptide reads, in one-letter code: tRNA-specific 2-thiouridylase MnmA (368 aa).

ATP-binding positions include 11–18 and Met37; that span reads GMSGGVDS. Residues 97 to 99 form an interaction with target base in tRNA region; the sequence is NPD. Cys102 acts as the Nucleophile in catalysis. Cys102 and Cys199 are joined by a disulfide. Gly127 lines the ATP pocket. Positions 149 to 151 are interaction with tRNA; the sequence is KDQ. The active-site Cysteine persulfide intermediate is Cys199. Residues 311-312 are interaction with tRNA; it reads RY.

This sequence belongs to the MnmA/TRMU family. In terms of assembly, interacts with TusE.

The protein resides in the cytoplasm. The catalysed reaction is S-sulfanyl-L-cysteinyl-[protein] + uridine(34) in tRNA + AH2 + ATP = 2-thiouridine(34) in tRNA + L-cysteinyl-[protein] + A + AMP + diphosphate + H(+). Its function is as follows. Catalyzes the 2-thiolation of uridine at the wobble position (U34) of tRNA(Lys), tRNA(Glu) and tRNA(Gln), leading to the formation of s(2)U34, the first step of tRNA-mnm(5)s(2)U34 synthesis. Sulfur is provided by IscS, via a sulfur-relay system. Binds ATP and its substrate tRNAs. The polypeptide is tRNA-specific 2-thiouridylase MnmA (Shigella boydii serotype 4 (strain Sb227)).